The following is a 187-amino-acid chain: Ribonuclease HII (187 aa).

Residues 1–187 (MIILGIDEAG…YKPVQVLLNE (187 aa)) form the RNase H type-2 domain. A divalent metal cation-binding residues include aspartate 7, glutamate 8, and aspartate 99.

Belongs to the RNase HII family. Mn(2+) serves as cofactor. Requires Mg(2+) as cofactor.

It localises to the cytoplasm. It carries out the reaction Endonucleolytic cleavage to 5'-phosphomonoester.. Functionally, endonuclease that specifically degrades the RNA of RNA-DNA hybrids. The sequence is that of Ribonuclease HII from Francisella tularensis subsp. holarctica (strain FTNF002-00 / FTA).